Here is a 129-residue protein sequence, read N- to C-terminus: Small ribosomal subunit protein uS9 (129 aa).

The tract at residues 110–129 is disordered; the sequence is VERKKYGKKKARKSFQFSKR. A compositionally biased stretch (basic residues) spans 114–129; sequence KYGKKKARKSFQFSKR.

This sequence belongs to the universal ribosomal protein uS9 family.

This Chlorobaculum parvum (strain DSM 263 / NCIMB 8327) (Chlorobium vibrioforme subsp. thiosulfatophilum) protein is Small ribosomal subunit protein uS9.